The following is a 341-amino-acid chain: General L-amino acid-binding periplasmic protein AapJ (341 aa).

Positions 1–23 are cleaved as a signal peptide; that stretch reads MKNKLLSAAIGAAVLAVGASAAS.

The protein belongs to the bacterial solute-binding protein 3 family. As to quaternary structure, the complex is composed of two ATP-binding proteins (AapP), two transmembrane proteins (AapM and AapQ) and a solute-binding protein (AapJ).

It is found in the periplasm. Part of the ABC transporter complex AapJQMP involved in uptake of L-amino acids. Affects the efflux of these amino acids as well. Essential for the development of bacteroids, the differentiated legume-symbiotic forms of this bacterium, and for the effective N(2) fixation by them. This Rhizobium johnstonii (strain DSM 114642 / LMG 32736 / 3841) (Rhizobium leguminosarum bv. viciae) protein is General L-amino acid-binding periplasmic protein AapJ (aapJ).